The following is a 336-amino-acid chain: Polyprenyl transferase dpasC (336 aa).

The helical transmembrane segment at 34–54 threads the bilayer; the sequence is LFTIFAGGMFLFVASFPTTAF. An N-linked (GlcNAc...) asparagine glycan is attached at asparagine 66. 7 helical membrane-spanning segments follow: residues 80–100, 125–145, 181–201, 205–225, 253–273, 274–294, and 311–331; these read ALCL…NDWI, QAML…HFML, YILG…IFHG, FAES…WTIF, HVHL…PMYL, NQFH…LSLL, and LHVD…IELL.

Belongs to the UbiA prenyltransferase family. It depends on Mg(2+) as a cofactor.

It is found in the membrane. Its pathway is secondary metabolite biosynthesis; terpenoid biosynthesis. Functionally, polyprenyl transferase; part of the gene cluster that mediates the biosynthesis of the diterpenoid pyrones subglutinols A and B. The first step of the pathway is the synthesis of the alpha-pyrone moiety by the polyketide synthase dpasA via condensation of one acetyl-CoA starter unit with 3 malonyl-CoA units and 2 methylations. The alpha-pyrone is then combined with geranylgeranyl pyrophosphate (GGPP) formed by the GGPP synthase dpasD through the action of the prenyltransferase dpasC to yield a linear alpha-pyrone diterpenoid. Subsequent steps in the diterpenoid pyrone biosynthetic pathway involve the decalin core formation, which is initiated by the epoxidation of the C10-C11 olefin by the FAD-dependent oxidoreductase dpasE, and is followed by a cyclization cascade catalyzed by the terpene cyclase dpasB. The FAD-linked oxidoreductase dpasF is then involved in tetrahydrofuran (THF) ring formation at the C5 unit to complete the formation of subglutinols A and B. DpasF possesses also an additional catalytic ability of multi-step oxidations to generate a new DDP analog with an enone system at the C5 named FDDP A. This chain is Polyprenyl transferase dpasC, found in Apiospora sacchari (Arthrinium sacchari).